A 278-amino-acid polypeptide reads, in one-letter code: Soluble NSF attachment protein homolog FPV011 (278 aa).

This sequence belongs to the SNAP family.

This chain is Soluble NSF attachment protein homolog FPV011, found in Fowlpox virus (strain NVSL) (FPV).